The chain runs to 275 residues: Putative ABC transporter permease protein ORF2 (275 aa).

6 consecutive transmembrane segments (helical) span residues 11–31 (YFIFLAVWTLIADVPFLFMLF), 74–94 (IAVSISVVLILIISSMAAFAF), 108–128 (LIIAGMAIPIHVTLIPIYVLT), 136–156 (TVFALIGPYVALSLPMSIFIL), 185–205 (ILLPLSAPALITVGIYNGTYL), and 239–259 (IPAIMAFLTLSLLPMLIAYIF). The region spanning 69–260 (LKNSVIAVSI…LPMLIAYIFG (192 aa)) is the ABC transmembrane type-1 domain.

It belongs to the binding-protein-dependent transport system permease family. MalFG subfamily.

It localises to the cell membrane. The chain is Putative ABC transporter permease protein ORF2 from Caldicellulosiruptor sp. (strain Rt8B.4).